A 321-amino-acid polypeptide reads, in one-letter code: Lipoyl synthase (321 aa).

[4Fe-4S] cluster is bound by residues Cys68, Cys73, Cys79, Cys94, Cys98, Cys101, and Ser308. Residues 80–297 (FNHGTATFMI…KAEAMAMGFT (218 aa)) enclose the Radical SAM core domain.

Belongs to the radical SAM superfamily. Lipoyl synthase family. [4Fe-4S] cluster serves as cofactor.

Its subcellular location is the cytoplasm. The catalysed reaction is [[Fe-S] cluster scaffold protein carrying a second [4Fe-4S](2+) cluster] + N(6)-octanoyl-L-lysyl-[protein] + 2 oxidized [2Fe-2S]-[ferredoxin] + 2 S-adenosyl-L-methionine + 4 H(+) = [[Fe-S] cluster scaffold protein] + N(6)-[(R)-dihydrolipoyl]-L-lysyl-[protein] + 4 Fe(3+) + 2 hydrogen sulfide + 2 5'-deoxyadenosine + 2 L-methionine + 2 reduced [2Fe-2S]-[ferredoxin]. It functions in the pathway protein modification; protein lipoylation via endogenous pathway; protein N(6)-(lipoyl)lysine from octanoyl-[acyl-carrier-protein]: step 2/2. Functionally, catalyzes the radical-mediated insertion of two sulfur atoms into the C-6 and C-8 positions of the octanoyl moiety bound to the lipoyl domains of lipoate-dependent enzymes, thereby converting the octanoylated domains into lipoylated derivatives. This chain is Lipoyl synthase, found in Yersinia pseudotuberculosis serotype O:1b (strain IP 31758).